The chain runs to 485 residues: Serine/threonine-protein kinase dst4 (485 aa).

The region spanning 21–278 (FRVLEVIGQG…AVDLLNHPFI (258 aa)) is the Protein kinase domain. ATP is bound by residues 27–35 (IGQGSFGVV) and Lys-50. Asp-142 acts as the Proton acceptor in catalysis. Disordered regions lie at residues 304–343 (RRKKAEEEEAEEAEEGDDYDDVNGGGDERQHGSSVSSAGL), 360–424 (VMRE…GSVV), and 436–485 (SMKL…NQDD). Positions 310–324 (EEEAEEAEEGDDYDD) are enriched in acidic residues. Over residues 370 to 393 (SNNGGTFIYNNNNNNSSKTSSSGT) the composition is skewed to low complexity. Composition is skewed to acidic residues over residues 406–417 (DDDDDDDIEEGG) and 450–468 (SSDEEDEEDEDDEDDEEGG). Polar residues predominate over residues 474–485 (VVYTKSPVNQDD).

It belongs to the protein kinase superfamily. STE Ser/Thr protein kinase family. STE20 subfamily. Mg(2+) is required as a cofactor.

The enzyme catalyses L-seryl-[protein] + ATP = O-phospho-L-seryl-[protein] + ADP + H(+). It catalyses the reaction L-threonyl-[protein] + ATP = O-phospho-L-threonyl-[protein] + ADP + H(+). In Dictyostelium discoideum (Social amoeba), this protein is Serine/threonine-protein kinase dst4.